The chain runs to 1147 residues: Myosin light chain kinase, smooth muscle (1147 aa).

An actin-binding region spans residues 1 to 41; that stretch reads MDFRANLQRQVKPKTVSEEERKVHSPQQVDFRSVLAKKGTP. Positions 1-330 are disordered; the sequence is MDFRANLQRQ…PPASPGTAPT (330 aa). A calmodulin-binding region spans residues 26–41; that stretch reads PQQVDFRSVLAKKGTP. The span at 43–55 shows a compositional bias: pro residues; the sequence is TPVPEKAPPPKPA. 2 consecutive repeat copies span residues 100–111 and 112–123. The interval 100–288 is 16 X 12 AA tandem repeats; it reads SLKPVANAKP…KAVANAKPAE (189 aa). The stretch at 124–132 is one 3; truncated repeat; it reads TLKPVANAE. A run of 13 repeats spans residues 133 to 144, 145 to 156, 157 to 168, 169 to 180, 181 to 192, 193 to 204, 205 to 216, 217 to 228, 229 to 240, 241 to 252, 253 to 264, 265 to 276, and 277 to 288. The actin-binding (calcium/calmodulin-insensitive) stretch occupies residues 292–692; it reads PAGKEELKKE…TVTVNTEQKV (401 aa). Basic and acidic residues predominate over residues 293–320; sequence AGKEELKKEVQNDVNCKREKAGAADNEK. 2 consecutive Ig-like C2-type domains span residues 329 to 417 and 469 to 557; these read PTFK…CHVT and PQIP…VNLT. A disulfide bridge connects residues C350 and C401. 2 disordered regions span residues 424–476 and 644–678; these read SENA…QFPE and SEPS…KEPE. The segment covering 459 to 472 has biased composition (pro residues); sequence PKTPPKAATPPQIP. The Fibronectin type-III domain maps to 565–657; that stretch reads PAGTPCASDI…QESELTTVGE (93 aa). The span at 644 to 653 shows a compositional bias: polar residues; that stretch reads SEPSQESELT. A compositionally biased stretch (acidic residues) spans 662–677; it reads PKDEVEEVSDDDEKEP. S670 is modified (phosphoserine). Y681 carries the post-translational modification Phosphotyrosine; by ABL1. The Protein kinase domain maps to 696-951; sequence YDIEERLGSG…CTQCLQHPWL (256 aa). ATP-binding positions include 702–710 and K725; that span reads LGSGKFGQV. Y807 carries the phosphotyrosine; by ABL1 modification. D817 acts as the Proton acceptor in catalysis. Residue Y867 is modified to Phosphotyrosine; by ABL1. The calmodulin-binding stretch occupies residues 943 to 1006; the sequence is TQCLQHPWLM…SGLSGRKSST (64 aa). A phosphoserine mark is found at S991, S992, S1004, S1005, and S1008. Positions 999–1019 are disordered; it reads LSGRKSSTGSPTSPLTAERLE. The segment covering 1002-1013 has biased composition (polar residues); sequence RKSSTGSPTSPL. T1010 is modified (phosphothreonine). S1011 carries the post-translational modification Phosphoserine. An Ig-like C2-type 3 domain is found at 1041 to 1130; it reads PYFSKTIRDL…GEATCTAELI (90 aa). C1062 and C1114 form a disulfide bridge.

Belongs to the protein kinase superfamily. CAMK Ser/Thr protein kinase family. In terms of assembly, all isoforms including Telokin bind calmodulin. Interacts with SVIL. Interacts with CTTN; this interaction is reduced during thrombin-induced endothelial cell (EC) contraction but is promoted by the barrier-protective agonist sphingosine 1-phosphate (S1P) within lamellipodia. A complex made of ABL1, CTTN and MYLK regulates cortical actin-based cytoskeletal rearrangement critical to sphingosine 1-phosphate (S1P)-mediated endothelial cell (EC) barrier enhancement. Binds to NAA10/ARD1 and PTK2B/PYK2. Requires Mg(2+) as cofactor. Ca(2+) serves as cofactor. Post-translationally, the C-terminus is deglutamylated by AGTPBP1/CCP1, AGBL1/CCP4 and AGBL4/CCP6, leading to the formation of Myosin light chain kinase, smooth muscle, deglutamylated form. The consequences of C-terminal deglutamylation are unknown. In terms of processing, can probably be down-regulated by phosphorylation. Tyrosine phosphorylation by ABL1 increases kinase activity, reverses MLCK-mediated inhibition of Arp2/3-mediated actin polymerization, and enhances CTTN-binding. Phosphorylation by SRC promotes CTTN binding. As to expression, isoform Telokin is found in all smooth muscle tested except the aorta. It is not present in non-muscle tissue.

The protein localises to the cytoplasm. It is found in the cell projection. Its subcellular location is the lamellipodium. The protein resides in the cleavage furrow. It localises to the cytoskeleton. The protein localises to the stress fiber. The catalysed reaction is L-seryl-[myosin light chain] + ATP = O-phospho-L-seryl-[myosin light chain] + ADP + H(+). It carries out the reaction L-threonyl-[myosin light chain] + ATP = O-phospho-L-threonyl-[myosin light chain] + ADP + H(+). With respect to regulation, all catalytically active isoforms require binding to calcium and calmodulin for activation. In terms of biological role, calcium/calmodulin-dependent myosin light chain kinase implicated in smooth muscle contraction via phosphorylation of myosin light chains (MLC). Also regulates actin-myosin interaction through a non-kinase activity. Phosphorylates PTK2B/PYK2 and myosin light-chains. Involved in the inflammatory response (e.g. apoptosis, vascular permeability, leukocyte diapedesis), cell motility and morphology, airway hyperreactivity and other activities relevant to asthma. Required for tonic airway smooth muscle contraction that is necessary for physiological and asthmatic airway resistance. Necessary for gastrointestinal motility. Implicated in the regulation of endothelial as well as vascular permeability, probably via the regulation of cytoskeletal rearrangements. In the nervous system it has been shown to control the growth initiation of astrocytic processes in culture and to participate in transmitter release at synapses formed between cultured sympathetic ganglion cells. Critical participant in signaling sequences that result in fibroblast apoptosis. Plays a role in the regulation of epithelial cell survival. Required for epithelial wound healing, especially during actomyosin ring contraction during purse-string wound closure. Mediates RhoA-dependent membrane blebbing. Triggers TRPC5 channel activity in a calcium-dependent signaling, by inducing its subcellular localization at the plasma membrane. Promotes cell migration (including tumor cells) and tumor metastasis. PTK2B/PYK2 activation by phosphorylation mediates ITGB2 activation and is thus essential to trigger neutrophil transmigration during acute lung injury (ALI). May regulate optic nerve head astrocyte migration. Probably involved in mitotic cytoskeletal regulation. Regulates tight junction probably by modulating ZO-1 exchange in the perijunctional actomyosin ring. Mediates burn-induced microvascular barrier injury; triggers endothelial contraction in the development of microvascular hyperpermeability by phosphorylating MLC. Essential for intestinal barrier dysfunction. Mediates Giardia spp.-mediated reduced epithelial barrier function during giardiasis intestinal infection via reorganization of cytoskeletal F-actin and tight junctional ZO-1. Necessary for hypotonicity-induced Ca(2+) entry and subsequent activation of volume-sensitive organic osmolyte/anion channels (VSOAC) in cervical cancer cells. This chain is Myosin light chain kinase, smooth muscle (MYLK), found in Oryctolagus cuniculus (Rabbit).